The primary structure comprises 188 residues: ATP synthase subunit b 1 (188 aa).

A helical transmembrane segment spans residues 35-55; the sequence is VHFGSHLFWLAISFGLFYLFI.

The protein belongs to the ATPase B chain family. In terms of assembly, F-type ATPases have 2 components, F(1) - the catalytic core - and F(0) - the membrane proton channel. F(1) has five subunits: alpha(3), beta(3), gamma(1), delta(1), epsilon(1). F(0) has three main subunits: a(1), b(2) and c(10-14). The alpha and beta chains form an alternating ring which encloses part of the gamma chain. F(1) is attached to F(0) by a central stalk formed by the gamma and epsilon chains, while a peripheral stalk is formed by the delta and b chains.

Its subcellular location is the cell inner membrane. Functionally, f(1)F(0) ATP synthase produces ATP from ADP in the presence of a proton or sodium gradient. F-type ATPases consist of two structural domains, F(1) containing the extramembraneous catalytic core and F(0) containing the membrane proton channel, linked together by a central stalk and a peripheral stalk. During catalysis, ATP synthesis in the catalytic domain of F(1) is coupled via a rotary mechanism of the central stalk subunits to proton translocation. Its function is as follows. Component of the F(0) channel, it forms part of the peripheral stalk, linking F(1) to F(0). This Bartonella henselae (strain ATCC 49882 / DSM 28221 / CCUG 30454 / Houston 1) (Rochalimaea henselae) protein is ATP synthase subunit b 1.